We begin with the raw amino-acid sequence, 355 residues long: Glucokinase (355 aa).

Residue 11 to 16 coordinates ATP; it reads GDIGGT.

The protein belongs to the bacterial glucokinase family.

The protein localises to the cytoplasm. It catalyses the reaction D-glucose + ATP = D-glucose 6-phosphate + ADP + H(+). The protein is Glucokinase of Synechocystis sp. (strain ATCC 27184 / PCC 6803 / Kazusa).